A 478-amino-acid polypeptide reads, in one-letter code: SPbeta prophage-derived uncharacterized protein YonD (478 aa).

The stretch at 326-419 (IQSQLNQKDE…KFSTEEVQNL (94 aa)) forms a coiled coil.

The polypeptide is SPbeta prophage-derived uncharacterized protein YonD (yonD) (Bacillus subtilis (strain 168)).